The chain runs to 157 residues: MNLLMLTFIICGLLTQVTKGSFEPQKCWKNNIGHCRRRCLDTERYILLCRNKLSCCISIIISHEYTRRPAFPVIHLEDITFDYSDVDSFTGSPVSMLNDLITFDTTKFGETITPETNTPETTMPPSETTSSKTTMPPSETATSETMPPPSQTALTHN.

A signal peptide spans 1-20 (MNLLMLTFIICGLLTQVTKG). 3 cysteine pairs are disulfide-bonded: Cys-27-Cys-55, Cys-35-Cys-49, and Cys-39-Cys-56. Positions 109 to 157 (GETITPETNTPETTMPPSETTSSKTTMPPSETATSETMPPPSQTALTHN) are disordered. A compositionally biased stretch (low complexity) spans 110 to 140 (ETITPETNTPETTMPPSETTSSKTTMPPSET). Over residues 141–157 (ATSETMPPPSQTALTHN) the composition is skewed to polar residues.

Belongs to the beta-defensin family.

It localises to the secreted. In terms of biological role, has antibacterial activity. In Pongo pygmaeus (Bornean orangutan), this protein is Beta-defensin 125 (DEFB125).